Reading from the N-terminus, the 353-residue chain is Phospho-N-acetylmuramoyl-pentapeptide-transferase (353 aa).

Transmembrane regions (helical) follow at residues 16-36, 64-84, 88-108, 130-150, 160-180, 198-218, 228-248, 256-276, 281-301, and 330-350; these read YISV…MYLM, AGTP…ATVL, LNNF…LIGI, LIFQ…YGHS, FPLF…IVGS, SILA…AVFA, IAGE…AFLW, VFMG…LAIV, ILLL…ILQV, and KIIV…LLSL.

The protein belongs to the glycosyltransferase 4 family. MraY subfamily. It depends on Mg(2+) as a cofactor.

Its subcellular location is the cell inner membrane. It catalyses the reaction UDP-N-acetyl-alpha-D-muramoyl-L-alanyl-gamma-D-glutamyl-meso-2,6-diaminopimeloyl-D-alanyl-D-alanine + di-trans,octa-cis-undecaprenyl phosphate = di-trans,octa-cis-undecaprenyl diphospho-N-acetyl-alpha-D-muramoyl-L-alanyl-D-glutamyl-meso-2,6-diaminopimeloyl-D-alanyl-D-alanine + UMP. The protein operates within cell wall biogenesis; peptidoglycan biosynthesis. Its function is as follows. Catalyzes the initial step of the lipid cycle reactions in the biosynthesis of the cell wall peptidoglycan: transfers peptidoglycan precursor phospho-MurNAc-pentapeptide from UDP-MurNAc-pentapeptide onto the lipid carrier undecaprenyl phosphate, yielding undecaprenyl-pyrophosphoryl-MurNAc-pentapeptide, known as lipid I. The protein is Phospho-N-acetylmuramoyl-pentapeptide-transferase of Aliarcobacter butzleri (strain RM4018) (Arcobacter butzleri).